Consider the following 344-residue polypeptide: Meiotic recombination protein DMC1 homolog B (344 aa).

133 to 140 (GEFRSGKT) contributes to the ATP binding site. A dsDNA-binding site is contributed by Arg235. Residues Arg235, Phe238, Arg241, Arg247, and Arg315 each contribute to the ssDNA site. 2 residues coordinate dsDNA: Arg241 and Arg247.

This sequence belongs to the RecA family. DMC1 subfamily. Highly expressed in spikelets. Expressed in meiotic young panicles.

It localises to the nucleus. Recombinase that may participate in meiotic recombination, specifically in homologous strand assimilation, which is required for the resolution of meiotic double-strand breaks. Exhibits DNA-dependent ATPase activity when bound to single-stranded DNA (ssDNA). Mediates renaturation of homologous complementary strands as well as assimilation of single strands into homologous supercoiled duplexes leading to D-loop formation. Binds circular single-stranded DNA (ssDNA) and circular double-stranded DNA (dsDNA) in vitro. Catalyzes DNA homologous renaturation and DNA strand exchange. The rates of these activities are dependent on the state of ATP hydrolysis. Forms helical filaments along ssDNA and dsDNA, and promotes strand exchange between ssDNA and dsDNA with long DNA substrates of several thousand base pairs. The presence of the replication protein A is not required for this activity. Seems to be required for homologous pairing and subsequent chromosome segregation during male meiosis. May be not directly required for homologous pairing during male meiosis. Required for synaptonemal complex assembly and crossover formation. Functions redundantly with DMC1A. The protein is Meiotic recombination protein DMC1 homolog B of Oryza sativa subsp. japonica (Rice).